A 238-amino-acid chain; its full sequence is Probable transcriptional regulatory protein YeeN (238 aa).

It belongs to the TACO1 family. YeeN subfamily.

The protein localises to the cytoplasm. The chain is Probable transcriptional regulatory protein YeeN from Salmonella typhi.